The sequence spans 451 residues: MTARSSLTIVLAAGEGTRMRSHLPKVLHPVAHQTLLAHVLTAAPKGTGTSLAVVIGPDHQAVADEARRIRPDAVTFVQAERLGTAHAVLAAREAIARGVDDLLIAFGDTPLISAETFARLRAPLANGAALAALGFRAADPAGYGRFIVEGDRLVAIREQADASADERKIDLCNAGVMAIDGRRALAILDKIGNANSKGEYYLTDAVEIVREQGWESVVIETSEDEVRGINTKAQLAEAESVMQARLRKAAMEAGVTLIAPETVYLSADTVFGKDVTIEPFVVIGPGVSIADGTVIHSFSHIVETTLGRNVSIGPYARLRPGTSLGDGARIGNFVETKAATLEAGVKVNHLSYIGDATVGANSNIGAGTITCNYDGFKKHKTIIGQGAFVGTNSSLVAPVKIGNGAYIGSGSVITRDVPDDAMALERNQQTIREGGAARYREMKTRGKKPEK.

Positions M1–K232 are pyrophosphorylase. UDP-N-acetyl-alpha-D-glucosamine contacts are provided by residues L11–G14, K25, Q78, and G83–T84. D108 is a binding site for Mg(2+). G144, E158, N173, and N230 together coordinate UDP-N-acetyl-alpha-D-glucosamine. N230 is a Mg(2+) binding site. The linker stretch occupies residues A233–A253. Positions G254–K451 are N-acetyltransferase. 2 residues coordinate UDP-N-acetyl-alpha-D-glucosamine: R319 and K337. Catalysis depends on H349, which acts as the Proton acceptor. Residues Y352 and N363 each contribute to the UDP-N-acetyl-alpha-D-glucosamine site. Residues A366, N372 to Y373, S409, and R426 contribute to the acetyl-CoA site.

The protein in the N-terminal section; belongs to the N-acetylglucosamine-1-phosphate uridyltransferase family. In the C-terminal section; belongs to the transferase hexapeptide repeat family. In terms of assembly, homotrimer. The cofactor is Mg(2+).

Its subcellular location is the cytoplasm. The enzyme catalyses alpha-D-glucosamine 1-phosphate + acetyl-CoA = N-acetyl-alpha-D-glucosamine 1-phosphate + CoA + H(+). It catalyses the reaction N-acetyl-alpha-D-glucosamine 1-phosphate + UTP + H(+) = UDP-N-acetyl-alpha-D-glucosamine + diphosphate. Its pathway is nucleotide-sugar biosynthesis; UDP-N-acetyl-alpha-D-glucosamine biosynthesis; N-acetyl-alpha-D-glucosamine 1-phosphate from alpha-D-glucosamine 6-phosphate (route II): step 2/2. It participates in nucleotide-sugar biosynthesis; UDP-N-acetyl-alpha-D-glucosamine biosynthesis; UDP-N-acetyl-alpha-D-glucosamine from N-acetyl-alpha-D-glucosamine 1-phosphate: step 1/1. The protein operates within bacterial outer membrane biogenesis; LPS lipid A biosynthesis. In terms of biological role, catalyzes the last two sequential reactions in the de novo biosynthetic pathway for UDP-N-acetylglucosamine (UDP-GlcNAc). The C-terminal domain catalyzes the transfer of acetyl group from acetyl coenzyme A to glucosamine-1-phosphate (GlcN-1-P) to produce N-acetylglucosamine-1-phosphate (GlcNAc-1-P), which is converted into UDP-GlcNAc by the transfer of uridine 5-monophosphate (from uridine 5-triphosphate), a reaction catalyzed by the N-terminal domain. The chain is Bifunctional protein GlmU from Bradyrhizobium diazoefficiens (strain JCM 10833 / BCRC 13528 / IAM 13628 / NBRC 14792 / USDA 110).